The chain runs to 293 residues: 2-pyrone-4,6-dicarboxylate hydrolase (293 aa).

The disordered stretch occupies residues methionine 1–threonine 20. Substrate-binding positions include histidine 29 to histidine 31, tyrosine 47, serine 75, arginine 122, arginine 128, tyrosine 154, and histidine 178. The Proton acceptor role is filled by aspartate 246. Position 251 (asparagine 251) interacts with substrate.

The protein belongs to the metallo-dependent hydrolases superfamily. PDC hydrolase family. In terms of assembly, monomer.

It carries out the reaction 2-oxo-2H-pyran-4,6-dicarboxylate + H2O = (1E)-4-oxobut-1-ene-1,2,4-tricarboxylate + H(+). The protein operates within secondary metabolite metabolism; lignin degradation. Strongly inhibited by 1 mM Zn(2+) ions. Also inhibited by pyridine-2,4-dicarboxylic acid, 5-hydroxyisophthalic acid and 5,5'-dithiobis(2-nitrobenzoic acid) (Ellman reagent). Its function is as follows. Contributes to the degradation of lignin at the level of the protocatechuate 4,5-cleavage pathway. Catalyzes the hydrolysis of 2-pyrone-4,6-dicarboxylate (PDC) to (4E)-oxalomesaconate (OMA). The keto form of OMA can tautomerize into the enol form, 4-carboxy-2-hydroxymuconate (CHM), under certain pH conditions. Also catalyzes the reverse reaction. Is essential for the growth of Sphingobium sp. SYK-6 on vanillate but is not responsible for the growth of this strain on syringate. This is 2-pyrone-4,6-dicarboxylate hydrolase from Sphingobium sp. (strain NBRC 103272 / SYK-6).